The following is a 477-amino-acid chain: Ankyrin repeat, SAM and basic leucine zipper domain-containing protein 1 (477 aa).

Phosphoserine occurs at positions 17, 18, and 20. ANK repeat units lie at residues 46-76 (EKKE…SVDA), 80-109 (YGWT…NASF), 112-146 (DKQT…DPNV), 150-179 (RLMT…EVNT), 183-212 (NGYT…NKML), and 216-245 (DGKL…PLEG). The 63-residue stretch at 274–336 (SYAAFGDLEV…KILAALKELE (63 aa)) folds into the SAM domain.

In terms of assembly, interacts with DDX4, PIWIL1, RANBP9 and TDRD1.

It is found in the cytoplasm. Its function is as follows. Plays a central role during spermatogenesis by repressing transposable elements and preventing their mobilization, which is essential for the germline integrity. Acts via the piRNA metabolic process, which mediates the repression of transposable elements during meiosis by forming complexes composed of piRNAs and Piwi proteins and governs the methylation and subsequent repression of transposons. Its association with pi-bodies suggests a participation in the primary piRNAs metabolic process. Required prior to the pachytene stage to facilitate the production of multiple types of piRNAs, including those associated with repeats involved in the regulation of retrotransposons. May act by mediating protein-protein interactions during germ cell maturation. The protein is Ankyrin repeat, SAM and basic leucine zipper domain-containing protein 1 (ASZ1) of Callithrix jacchus (White-tufted-ear marmoset).